An 800-amino-acid polypeptide reads, in one-letter code: Phenylalanine--tRNA ligase beta subunit (800 aa).

Positions 39 to 154 (TKDIKNLVVG…EAQVPGTDAL (116 aa)) constitute a tRNA-binding domain. The B5 domain occupies 408–483 (AFITPIDITA…RIYGYDDIPS (76 aa)). Positions 461, 467, 470, and 471 each coordinate Mg(2+). The 93-residue stretch at 708-800 (PRFPGMSRDI…ALIEQGAVIR (93 aa)) folds into the FDX-ACB domain.

The protein belongs to the phenylalanyl-tRNA synthetase beta subunit family. Type 1 subfamily. As to quaternary structure, tetramer of two alpha and two beta subunits. Requires Mg(2+) as cofactor.

The protein localises to the cytoplasm. It catalyses the reaction tRNA(Phe) + L-phenylalanine + ATP = L-phenylalanyl-tRNA(Phe) + AMP + diphosphate + H(+). The sequence is that of Phenylalanine--tRNA ligase beta subunit from Staphylococcus aureus (strain USA300).